Consider the following 323-residue polypeptide: Phosphate acetyltransferase (323 aa).

This sequence belongs to the phosphate acetyltransferase and butyryltransferase family.

It is found in the cytoplasm. It carries out the reaction acetyl-CoA + phosphate = acetyl phosphate + CoA. Its pathway is metabolic intermediate biosynthesis; acetyl-CoA biosynthesis; acetyl-CoA from acetate: step 2/2. This Bacillus subtilis (strain 168) protein is Phosphate acetyltransferase (pta).